Here is a 483-residue protein sequence, read N- to C-terminus: Aspartyl/glutamyl-tRNA(Asn/Gln) amidotransferase subunit B (483 aa).

It belongs to the GatB/GatE family. GatB subfamily. Heterotrimer of A, B and C subunits.

The catalysed reaction is L-glutamyl-tRNA(Gln) + L-glutamine + ATP + H2O = L-glutaminyl-tRNA(Gln) + L-glutamate + ADP + phosphate + H(+). It catalyses the reaction L-aspartyl-tRNA(Asn) + L-glutamine + ATP + H2O = L-asparaginyl-tRNA(Asn) + L-glutamate + ADP + phosphate + 2 H(+). Allows the formation of correctly charged Asn-tRNA(Asn) or Gln-tRNA(Gln) through the transamidation of misacylated Asp-tRNA(Asn) or Glu-tRNA(Gln) in organisms which lack either or both of asparaginyl-tRNA or glutaminyl-tRNA synthetases. The reaction takes place in the presence of glutamine and ATP through an activated phospho-Asp-tRNA(Asn) or phospho-Glu-tRNA(Gln). In Roseiflexus castenholzii (strain DSM 13941 / HLO8), this protein is Aspartyl/glutamyl-tRNA(Asn/Gln) amidotransferase subunit B.